A 309-amino-acid chain; its full sequence is tRNA dimethylallyltransferase (309 aa).

13–20 (GPTAVGKS) is an ATP binding site. Residue 15–20 (TAVGKS) participates in substrate binding.

It belongs to the IPP transferase family. As to quaternary structure, monomer. Mg(2+) is required as a cofactor.

The enzyme catalyses adenosine(37) in tRNA + dimethylallyl diphosphate = N(6)-dimethylallyladenosine(37) in tRNA + diphosphate. In terms of biological role, catalyzes the transfer of a dimethylallyl group onto the adenine at position 37 in tRNAs that read codons beginning with uridine, leading to the formation of N6-(dimethylallyl)adenosine (i(6)A). This chain is tRNA dimethylallyltransferase, found in Lacticaseibacillus paracasei (strain ATCC 334 / BCRC 17002 / CCUG 31169 / CIP 107868 / KCTC 3260 / NRRL B-441) (Lactobacillus paracasei).